Consider the following 563-residue polypeptide: Beta-catenin-like protein 1 (563 aa).

N-acetylmethionine is present on Met-1. The disordered stretch occupies residues 1-49 (MDVGELLSYQPNRGTKRPRDDEEEEQKMRRKQTGTRERGRYREEEMTVV). The Nuclear localization signal motif lies at 16 to 33 (KRPRDDEEEEQKMRRKQT). Residues 34 to 45 (GTRERGRYREEE) show a composition bias toward basic and acidic residues. HEAT repeat units lie at residues 79 to 129 (ESSV…VVAT) and 134 to 176 (YHLL…TLHE). Position 91 is an N6-acetyllysine (Lys-91). The Nuclear export signal (NES) motif lies at 130–140 (MPDLYHLLVEL). ARM repeat units follow at residues 178–228 (EEGA…MAEF), 229–273 (RPEM…LQDN), 274–323 (DENR…CLML), 325–363 (SNRERFLKGEGLQLMNLMLREKKISRSSALKVLDHAMIG), and 364–417 (PEGT…LLRN). Ser-389 carries the phosphoserine modification. A coiled-coil region spans residues 476-540 (DTEEEFYLRR…HIIKEYAENI (65 aa)). A Phosphoserine modification is found at Ser-545.

Component of the PRP19-CDC5L splicing complex composed of a core complex comprising a homotetramer of PRPF19, CDC5L, PLRG1 and BCAS2, and at least three less stably associated proteins CTNNBL1, CWC15 and HSPA8. Interacts directly with CWC15 and CDC5L in the complex. Interacts with AICDA; the interaction is important for the antibody diversification activity of AICDA. Interacts with PRPF31 (via its NLS). Interacts (via its N-terminal NLS) with KPNA1 and KPNA2. As to expression, widely expressed with highest levels in skeletal muscle, placenta, heart, spleen, testis and thyroid.

The protein resides in the nucleus. It localises to the cytoplasm. Component of the PRP19-CDC5L complex that forms an integral part of the spliceosome and is required for activating pre-mRNA splicing. Participates in AID/AICDA-mediated somatic hypermutation (SHM) and class-switch recombination (CSR), 2 processes resulting in the production of high-affinity, mutated isotype-switched antibodies. In Homo sapiens (Human), this protein is Beta-catenin-like protein 1 (CTNNBL1).